The primary structure comprises 532 residues: Probable cytochrome c oxidase subunit 1 (532 aa).

8 helical membrane-spanning segments follow: residues 33 to 53 (IMYI…SLLF), 74 to 94 (VLIT…ALFG), 95 to 115 (GFGN…FPRL), 118 to 138 (ISFW…FVDG), 163 to 183 (MAIF…INLI), 200 to 220 (PLFV…MPVL), 252 to 272 (LFWF…FGIV), and 284 to 304 (IFGY…GFIV). H79 is a Fe(II)-heme a binding site. Cu cation contacts are provided by H258 and Y262. Residues H307 and H308 each contribute to the Cu cation site. The next 2 membrane-spanning stretches (helical) occupy residues 318–338 (ALIY…IKIF) and 355–375 (MLFS…GIIL). Residue H393 coordinates heme a3. Helical transmembrane passes span 394–414 (FHYT…YYWF), 431–451 (FWIT…LGLA), and 473–493 (IGAG…FYTL). H395 lines the Fe(II)-heme a pocket.

This sequence belongs to the heme-copper respiratory oxidase family.

The protein resides in the cell membrane. It catalyses the reaction 4 Fe(II)-[cytochrome c] + O2 + 8 H(+)(in) = 4 Fe(III)-[cytochrome c] + 2 H2O + 4 H(+)(out). The protein operates within energy metabolism; oxidative phosphorylation. Its function is as follows. Cytochrome c oxidase is the component of the respiratory chain that catalyzes the reduction of oxygen to water. Subunits 1-3 form the functional core of the enzyme complex. CO I is the catalytic subunit of the enzyme. Electrons originating in cytochrome c are transferred via the copper A center of subunit 2 and heme A of subunit 1 to the bimetallic center formed by heme A3 and copper B. The protein is Probable cytochrome c oxidase subunit 1 (ctaD) of Rickettsia felis (strain ATCC VR-1525 / URRWXCal2) (Rickettsia azadi).